A 484-amino-acid chain; its full sequence is Coronin-1B (484 aa).

Phosphoserine is present on Ser-2. WD repeat units lie at residues 80-120 (GHTG…LTSP), 130-170 (GHTK…ELYR), 174-213 (LHPD…LVAE), 217-260 (AHEG…EPMA), and 265-305 (DSSN…PYIH). The disordered stretch occupies residues 404–446 (LKVSRRNVLSDSRPASYSRSGASTATAVTDVPSGNLAGAGEAG). Residues 410–430 (NVLSDSRPASYSRSGASTATA) show a composition bias toward polar residues. The stretch at 444–482 (EAGKLEEVMQELRALRMLVKEQGERISRLEEQLGRMENG) forms a coiled coil.

The protein belongs to the WD repeat coronin family. Forms homooligomers, but does not form complexes with the other coronins. Interacts with Arp2/3 complex components, including ACTR2, ARPC1B and ARPC2. Binds actin. Post-translationally, phosphorylation on Ser-2 regulates the interaction with the Arp2/3 complex and cell motility in fibroblasts. Phosphorylation does not seem to affect subcellular location. Ubiquitous.

Its subcellular location is the cytoplasm. The protein resides in the cytoskeleton. The protein localises to the stress fiber. Regulates leading edge dynamics and cell motility in fibroblasts. May be involved in cytokinesis and signal transduction. The protein is Coronin-1B (Coro1b) of Mus musculus (Mouse).